Consider the following 876-residue polypeptide: Alanine--tRNA ligase (876 aa).

Positions 564, 568, 666, and 670 each coordinate Zn(2+).

It belongs to the class-II aminoacyl-tRNA synthetase family. The cofactor is Zn(2+).

Its subcellular location is the cytoplasm. It catalyses the reaction tRNA(Ala) + L-alanine + ATP = L-alanyl-tRNA(Ala) + AMP + diphosphate. In terms of biological role, catalyzes the attachment of alanine to tRNA(Ala) in a two-step reaction: alanine is first activated by ATP to form Ala-AMP and then transferred to the acceptor end of tRNA(Ala). Also edits incorrectly charged Ser-tRNA(Ala) and Gly-tRNA(Ala) via its editing domain. This is Alanine--tRNA ligase from Colwellia psychrerythraea (strain 34H / ATCC BAA-681) (Vibrio psychroerythus).